We begin with the raw amino-acid sequence, 427 residues long: MALVEDVFSLSPKAVSSALASLWRPIQGGVSAPLGFQAAGITAGLKDSGKPDLALLLAPEGAVCAGMFTTSLVRAACVDLCVDHLQACGGKARAVLINSGQANACTGERGWLDSLRASQALAGRLELPVEQVLICSTGVIGVPIPMDTLLAGLDPLVEALSDEGGAEAAGAILTTDLVEKQFALEAELGGRSVRIGGMAKGSGMIHPDMATMLGYLSCDVGVEVDAWQAMLKRVVDCSFNAMTVDGDTSTNDSCLAFAAGELLEQEHLQALEAGLLVAAQQLAKAIARDGEGATCLLEVQVEGVVGDVEARRIARTVCGSSLVKTAVHGRDPNWGRIVAAAGCAGVPFDPAAVALWLGPHQLMEFGEPLPFDRLAASRYMQERVDGSYLCDDTVQIRLVVGDGSGDGMAWGCDLSDQYVRINADYTT.

The substrate site is built by Thr174, Lys200, Thr211, Glu291, Asn422, and Thr427. Catalysis depends on Thr211, which acts as the Nucleophile.

This sequence belongs to the ArgJ family. As to quaternary structure, heterotetramer of two alpha and two beta chains.

The protein localises to the cytoplasm. The enzyme catalyses N(2)-acetyl-L-ornithine + L-glutamate = N-acetyl-L-glutamate + L-ornithine. It carries out the reaction L-glutamate + acetyl-CoA = N-acetyl-L-glutamate + CoA + H(+). Its pathway is amino-acid biosynthesis; L-arginine biosynthesis; L-ornithine and N-acetyl-L-glutamate from L-glutamate and N(2)-acetyl-L-ornithine (cyclic): step 1/1. It functions in the pathway amino-acid biosynthesis; L-arginine biosynthesis; N(2)-acetyl-L-ornithine from L-glutamate: step 1/4. Its function is as follows. Catalyzes two activities which are involved in the cyclic version of arginine biosynthesis: the synthesis of N-acetylglutamate from glutamate and acetyl-CoA as the acetyl donor, and of ornithine by transacetylation between N(2)-acetylornithine and glutamate. In Prochlorococcus marinus (strain MIT 9313), this protein is Arginine biosynthesis bifunctional protein ArgJ.